The primary structure comprises 113 residues: Ribonuclease P protein component (113 aa).

Belongs to the RnpA family. In terms of assembly, consists of a catalytic RNA component (M1 or rnpB) and a protein subunit.

The catalysed reaction is Endonucleolytic cleavage of RNA, removing 5'-extranucleotides from tRNA precursor.. Functionally, RNaseP catalyzes the removal of the 5'-leader sequence from pre-tRNA to produce the mature 5'-terminus. It can also cleave other RNA substrates such as 4.5S RNA. The protein component plays an auxiliary but essential role in vivo by binding to the 5'-leader sequence and broadening the substrate specificity of the ribozyme. The protein is Ribonuclease P protein component of Desulforamulus reducens (strain ATCC BAA-1160 / DSM 100696 / MI-1) (Desulfotomaculum reducens).